The following is a 368-amino-acid chain: Glycoprotein UL18 (368 aa).

A signal peptide spans 1 to 18; that stretch reads MMTMWCLTLFVLWMLRVV. The segment at 19 to 114 is alpha-1-like; that stretch reads GMHVLRYGYT…EIALGYRSQS (96 aa). 13 N-linked (GlcNAc...) asparagine; by host glycosylation sites follow: asparagine 56, asparagine 66, asparagine 74, asparagine 95, asparagine 123, asparagine 127, asparagine 150, asparagine 167, asparagine 177, asparagine 193, asparagine 240, asparagine 282, and asparagine 291. Residues 115 to 208 are alpha-2-like; it reads VLTWTHECNT…VIYSGFQPPV (94 aa). Residues 209-303 form an alpha-3-like region; sequence THPVVKGGVR…VEIPISVTSP (95 aa). A helical membrane pass occupies residues 321 to 342; sequence YNTMTISSVLLALLLCALLFAF.

In terms of assembly, interacts with host LILRB1.

It localises to the host membrane. Functionally, plays a role in the protection against host NK cell cytotoxicity by interacting with and modulating the activity of the host inhibitory leukocyte Ig-like receptor 1/LILRB1, which is expressed on monocytes, dendritic cells, as well as subsets of T and NK cells. UL18 exerts an inhibitory effect on LIR-1+ NK cells, while it stimulates LIR-1- NK cell. These modulations prevent lysis of the infected cells by NK cells. The sequence is that of Glycoprotein UL18 (H301) from Homo sapiens (Human).